The sequence spans 662 residues: Retaining alpha-galactosidase (662 aa).

The signal sequence occupies residues 1–19 (MKKLTFLLLCVLCTLSLQA). Glutamate 174 is a Ca(2+) binding site. Aspartate 415 serves as the catalytic Nucleophile. Ca(2+) is bound by residues glutamate 464 and glutamate 470. Catalysis depends on glutamate 470, which acts as the Proton donor/acceptor.

Belongs to the glycosyl hydrolase 97 family. In terms of assembly, monomer. The cofactor is Ca(2+).

The catalysed reaction is Hydrolysis of terminal, non-reducing alpha-D-galactose residues in alpha-D-galactosides, including galactose oligosaccharides, galactomannans and galactolipids.. Inhibited by EDTA in vitro. Its function is as follows. Galactosidase that is able to hydrolyze the alpha-1,6 disaccharide melibiose and the synthetic p-nitrophenyl alpha-galactoside substrate (pNP-Gal), with retention of the anomeric configuration. Does not hydrolyze DNP-Glc or pNP-Glc. The protein is Retaining alpha-galactosidase of Bacteroides thetaiotaomicron (strain ATCC 29148 / DSM 2079 / JCM 5827 / CCUG 10774 / NCTC 10582 / VPI-5482 / E50).